A 271-amino-acid polypeptide reads, in one-letter code: Acyl-[acyl-carrier-protein]--UDP-N-acetylglucosamine O-acyltransferase (271 aa).

The protein belongs to the transferase hexapeptide repeat family. LpxA subfamily. In terms of assembly, homotrimer.

It localises to the cytoplasm. The enzyme catalyses a (3R)-hydroxyacyl-[ACP] + UDP-N-acetyl-alpha-D-glucosamine = a UDP-3-O-[(3R)-3-hydroxyacyl]-N-acetyl-alpha-D-glucosamine + holo-[ACP]. It participates in glycolipid biosynthesis; lipid IV(A) biosynthesis; lipid IV(A) from (3R)-3-hydroxytetradecanoyl-[acyl-carrier-protein] and UDP-N-acetyl-alpha-D-glucosamine: step 1/6. Involved in the biosynthesis of lipid A, a phosphorylated glycolipid that anchors the lipopolysaccharide to the outer membrane of the cell. This chain is Acyl-[acyl-carrier-protein]--UDP-N-acetylglucosamine O-acyltransferase, found in Ralstonia nicotianae (strain ATCC BAA-1114 / GMI1000) (Ralstonia solanacearum).